Reading from the N-terminus, the 203-residue chain is ATP-dependent Clp protease proteolytic subunit (203 aa).

Serine 107 (nucleophile) is an active-site residue. Residue histidine 132 is part of the active site.

This sequence belongs to the peptidase S14 family. As to quaternary structure, fourteen ClpP subunits assemble into 2 heptameric rings which stack back to back to give a disk-like structure with a central cavity, resembling the structure of eukaryotic proteasomes.

Its subcellular location is the cytoplasm. The enzyme catalyses Hydrolysis of proteins to small peptides in the presence of ATP and magnesium. alpha-casein is the usual test substrate. In the absence of ATP, only oligopeptides shorter than five residues are hydrolyzed (such as succinyl-Leu-Tyr-|-NHMec, and Leu-Tyr-Leu-|-Tyr-Trp, in which cleavage of the -Tyr-|-Leu- and -Tyr-|-Trp bonds also occurs).. Its function is as follows. Cleaves peptides in various proteins in a process that requires ATP hydrolysis. Has a chymotrypsin-like activity. Plays a major role in the degradation of misfolded proteins. The protein is ATP-dependent Clp protease proteolytic subunit of Shewanella loihica (strain ATCC BAA-1088 / PV-4).